A 238-amino-acid chain; its full sequence is MRPSGRRADELRPISIQRQFTKHAEGSVLIGFGDTRVLCTASVEARVPPWLRGQGRGWVTAEYGMLPRSTHTRSDREAARGKQQGRTVEIQRLIGRSLRAAVDLQALGERSVVVDCDVLQADGGTRTAAITGAFVALTDALEGLVRQRALPASPLHGQVASVSVGVYRGEPVLDLDYAEDGEAETDMNVVMNDAGAFIELQGTAEGHAFRRDELDRMLALAEKGVGELLQHQQEALAT.

Residues Arg-86 and 124–126 (GTR) contribute to the phosphate site.

It belongs to the RNase PH family. As to quaternary structure, homohexameric ring arranged as a trimer of dimers.

It carries out the reaction tRNA(n+1) + phosphate = tRNA(n) + a ribonucleoside 5'-diphosphate. Functionally, phosphorolytic 3'-5' exoribonuclease that plays an important role in tRNA 3'-end maturation. Removes nucleotide residues following the 3'-CCA terminus of tRNAs; can also add nucleotides to the ends of RNA molecules by using nucleoside diphosphates as substrates, but this may not be physiologically important. Probably plays a role in initiation of 16S rRNA degradation (leading to ribosome degradation) during starvation. This is Ribonuclease PH from Halorhodospira halophila (strain DSM 244 / SL1) (Ectothiorhodospira halophila (strain DSM 244 / SL1)).